The following is a 178-amino-acid chain: PRA1 family protein 2 (178 aa).

At 1–41 the chain is on the cytoplasmic side; that stretch reads MSEVRLPPLRALDDFVLGSARLVAPDPCDPQRWCHRVINNL. Residues 42-62 traverse the membrane as a helical segment; it reads LYYQTNYLICFGLGLALAGYV. Topologically, residues 63–64 are extracellular; sequence RP. Residues 65-85 form a helical membrane-spanning segment; that stretch reads LHTLLSALVVAVALGMLVCAA. The Cytoplasmic segment spans residues 86-96; it reads ENRAAVRRCRR. The chain crosses the membrane as a helical span at residues 97–119; sequence SHPAACLAAVLAVGFLVLWAAGG. Residues 120–122 are Extracellular-facing; that stretch reads AGT. A helical membrane pass occupies residues 123-140; it reads FLLSIAGPVLLILVHASL. Over 141–178 the chain is Cytoplasmic; it reads RLRNLKNKIENKIESIGLKRTPMGLLLEALGQEQEAGS.

It belongs to the PRA1 family. In terms of assembly, interacts with CCR5 and GDE1.

Its subcellular location is the endosome membrane. May be involved in ER/Golgi transport and vesicular traffic. Plays a proapoptotic role in cerulenin-induced neuroblastoma apoptosis. This Bos taurus (Bovine) protein is PRA1 family protein 2 (PRAF2).